A 469-amino-acid polypeptide reads, in one-letter code: MASPRELTQNPLKKIWMPYSNGRPALHACQRGVCMTNCPTLIVMVGLPARGKTYISKKLTRYLNWIGVPTREFNVGQYRRDVVKTYKSFEFFLPDNEEGLKIRKQCALAALRDVRRFLSEEGGHVAVFDATNTTRERRATIFNFGEQNGYKTFFVESICVDPEVIAANIVQVKLGSPDYVNRDSDEATEDFMRRIECYENSYESLDEDLDRDLSYIKIMDVGQSYVVNRVADHIQSRIVYYLMNIHVTPRSIYLCRHGESELNLKGRIGGDPGLSPRGREFAKSLAQFISDQNIKDLKVWTSQMKRTIQTAEALGVPYEQWKVLNEIDAGVCEEMTYEEIQDNYPLEFALRDQDKYRYRYPKGESYEDLVQRLEPVIMELERQENVLVICHQAVMRCLLAYFLDKAAEQLPYLKCPLHTVLKLTPVAYGCKVESIFLNVAAVNTHRDRPQNVDISRPPEEALVTVPAHQ.

Residues 1-249 (MASPRELTQN…YYLMNIHVTP (249 aa)) form a 6-phosphofructo-2-kinase region. Residue 46–54 (GLPARGKTY) coordinates ATP. R79 and R103 together coordinate beta-D-fructose 6-phosphate. D129 is a catalytic residue. Residues T131 and R137 each contribute to the beta-D-fructose 6-phosphate site. The active site involves C159. Residue 168 to 173 (NIVQVK) coordinates ATP. The beta-D-fructose 6-phosphate site is built by K173, R194, and Y198. Residues 250–469 (RSIYLCRHGE…EALVTVPAHQ (220 aa)) form a fructose-2,6-bisphosphatase region. R256 contributes to the beta-D-fructose 2,6-bisphosphate binding site. The Tele-phosphohistidine intermediate role is filled by H257. Residues N263, G269, and R306 each coordinate beta-D-fructose 2,6-bisphosphate. E326 acts as the Proton donor/acceptor in catalysis. Residues Y337, R351, K355, Y366, Q392, and R396 each coordinate beta-D-fructose 2,6-bisphosphate. Residue 348–351 (FALR) participates in ATP binding. ATP contacts are provided by residues 392–396 (QAVMR) and Y428. T444 bears the Phosphothreonine; by PKC mark.

In the C-terminal section; belongs to the phosphoglycerate mutase family. As to quaternary structure, homodimer.

It catalyses the reaction beta-D-fructose 2,6-bisphosphate + H2O = beta-D-fructose 6-phosphate + phosphate. The catalysed reaction is beta-D-fructose 6-phosphate + ATP = beta-D-fructose 2,6-bisphosphate + ADP + H(+). The most important regulatory mechanism of these opposing activities is by phosphorylation and dephosphorylation of the enzyme. Its function is as follows. Synthesis and degradation of fructose 2,6-bisphosphate. This Homo sapiens (Human) protein is 6-phosphofructo-2-kinase/fructose-2,6-bisphosphatase 4 (PFKFB4).